The chain runs to 153 residues: Aspartate carbamoyltransferase regulatory chain (153 aa).

Residues cysteine 109, cysteine 114, cysteine 138, and cysteine 141 each coordinate Zn(2+).

It belongs to the PyrI family. As to quaternary structure, contains catalytic and regulatory chains. Requires Zn(2+) as cofactor.

Its function is as follows. Involved in allosteric regulation of aspartate carbamoyltransferase. This is Aspartate carbamoyltransferase regulatory chain from Cenarchaeum symbiosum (strain A).